The chain runs to 41 residues: Bacteriocin bavaricin-A (41 aa).

This sequence belongs to the bacteriocin class IIA/YGNGV family.

It localises to the secreted. Its function is as follows. This heat stable bacteriocin shows activity against species of Lactobacillus, Listeria monocytogenes, Pediococcus, Enterococcus, Leuconostoc and Lactococcus. The sequence is that of Bacteriocin bavaricin-A from Latilactobacillus sakei (Lactobacillus sakei).